A 180-amino-acid polypeptide reads, in one-letter code: Large ribosomal subunit protein uL6 (180 aa).

This sequence belongs to the universal ribosomal protein uL6 family. Part of the 50S ribosomal subunit.

Its function is as follows. This protein binds to the 23S rRNA, and is important in its secondary structure. It is located near the subunit interface in the base of the L7/L12 stalk, and near the tRNA binding site of the peptidyltransferase center. This chain is Large ribosomal subunit protein uL6, found in Dictyoglomus turgidum (strain DSM 6724 / Z-1310).